The primary structure comprises 462 residues: Transcription factor Sox-8 (462 aa).

The segment covering 1-12 (MLKMTEEHDKCV) has biased composition (basic and acidic residues). 3 disordered regions span residues 1–57 (MLKM…RKVD), 155–243 (RLRI…QDLK), and 291–375 (GHTS…GSYS). Positions 15 to 50 (QPCSPSGTNSSMSQDESDSDAPSSPTGSDGQGSLLT) are enriched in polar residues. A DNA-binding region (HMG box) is located at residues 100 to 168 (VKRPMNAFMV…QHKKDHPDYK (69 aa)). Composition is skewed to basic and acidic residues over residues 155-169 (RLRI…DYKY), 209-218 (DAHHHAEHAG), and 232-243 (TDLHHGAKQDLK). Positions 415–423 (SSLYQYPYF) match the 9aaTAD motif. A disordered region spans residues 442–462 (PAHSPTGSGWDQPVYTTLSRP). A compositionally biased stretch (polar residues) spans 446–462 (PTGSGWDQPVYTTLSRP).

The protein resides in the nucleus. Its function is as follows. May play a role in central nervous system, limb and facial development. May be involved in male sex determination. Binds the consensus motif 5'-[AT][AT]CAA[AT]G-3'. This chain is Transcription factor Sox-8 (sox8), found in Tetraodon nigroviridis (Spotted green pufferfish).